A 32-amino-acid chain; its full sequence is Delta-conotoxin EVIA (32 aa).

3 disulfide bridges follow: C3/C21, C10/C25, and C20/C29. Residue P6 is modified to 4-hydroxyproline. Position 32 is a leucine amide (L32).

The protein belongs to the conotoxin O1 superfamily. Expressed by the venom duct.

It localises to the secreted. In terms of biological role, delta-conotoxins bind to site 6 of voltage-gated sodium channels and inhibit the inactivation process. This toxin inhibits sodium channel inactivation in neuronal membranes from amphibians and mammals (Nav1.2a/SCN1A, Nav1.3/SCN3A and Nav1.6/SCN8A) upon binding to receptor site 6. The polypeptide is Delta-conotoxin EVIA (Conus ermineus (Agate cone)).